Consider the following 379-residue polypeptide: Cytochrome b (379 aa).

4 consecutive transmembrane segments (helical) span residues F34 to M54, W78 to I99, W114 to L134, and F179 to T199. Residues H84 and H98 each contribute to the heme b site. Residues H183 and H197 each contribute to the heme b site. H202 contributes to the a ubiquinone binding site. The next 4 membrane-spanning stretches (helical) occupy residues L227–S247, L289–H309, L321–S341, and F348–P368.

The protein belongs to the cytochrome b family. As to quaternary structure, the cytochrome bc1 complex contains 11 subunits: 3 respiratory subunits (MT-CYB, CYC1 and UQCRFS1), 2 core proteins (UQCRC1 and UQCRC2) and 6 low-molecular weight proteins (UQCRH/QCR6, UQCRB/QCR7, UQCRQ/QCR8, UQCR10/QCR9, UQCR11/QCR10 and a cleavage product of UQCRFS1). This cytochrome bc1 complex then forms a dimer. The cofactor is heme b.

The protein localises to the mitochondrion inner membrane. Its function is as follows. Component of the ubiquinol-cytochrome c reductase complex (complex III or cytochrome b-c1 complex) that is part of the mitochondrial respiratory chain. The b-c1 complex mediates electron transfer from ubiquinol to cytochrome c. Contributes to the generation of a proton gradient across the mitochondrial membrane that is then used for ATP synthesis. The chain is Cytochrome b (MT-CYB) from Rhea americana (Greater rhea).